The following is a 195-amino-acid chain: Nicotinamide riboside kinase 2 (195 aa).

9-17 provides a ligand contact to ATP; sequence GVTNGGKTT. Residues T16 and D35 each contribute to the Mg(2+) site. D35 functions as the Proton acceptor in the catalytic mechanism. Residues 35 to 38 and 54 to 55 contribute to the substrate site; these read DDFF and WD. R130 contributes to the ATP binding site. Substrate is bound by residues R131 and 136 to 137; that span reads YM. Residues 134-136 and 174-176 contribute to the ATP site; these read RTY and KSP.

It belongs to the uridine kinase family. NRK subfamily. As to quaternary structure, monomer. Interacts with ITGB1 alone or when associated with alpha-7, but not with alpha-5. As to expression, expressed in skeletal muscle (at protein level).

It carries out the reaction beta-nicotinamide D-riboside + ATP = beta-nicotinamide D-ribonucleotide + ADP + H(+). It catalyses the reaction beta-D-ribosylnicotinate + ATP = nicotinate beta-D-ribonucleotide + ADP + H(+). It functions in the pathway cofactor biosynthesis; NAD(+) biosynthesis. In terms of biological role, catalyzes the phosphorylation of nicotinamide riboside (NR) and nicotinic acid riboside (NaR) to form nicotinamide mononucleotide (NMN) and nicotinic acid mononucleotide (NaMN). Reduces laminin matrix deposition and cell adhesion to laminin, but not to fibronectin. Involved in the regulation of PXN at the protein level and of PXN tyrosine phosphorylation. May play a role in the regulation of terminal myogenesis. In Mus musculus (Mouse), this protein is Nicotinamide riboside kinase 2 (Nmrk2).